A 247-amino-acid chain; its full sequence is uncharacterized protein (247 aa).

The NADP(+) site is built by Leu-11, Asn-85, and Lys-119. The active-site Proton donor is Ser-136. NADP(+) contacts are provided by Tyr-150, Lys-154, Val-181, and Thr-183. The active-site Proton acceptor is the Tyr-150. The active-site Lowers pKa of active site Tyr is the Lys-154.

This sequence belongs to the short-chain dehydrogenases/reductases (SDR) family.

This is an uncharacterized protein from Schizosaccharomyces pombe (strain 972 / ATCC 24843) (Fission yeast).